Here is a 295-residue protein sequence, read N- to C-terminus: Aspartate carbamoyltransferase catalytic subunit (295 aa).

Residues Arg-49 and Thr-50 each coordinate carbamoyl phosphate. Lys-77 contacts L-aspartate. 3 residues coordinate carbamoyl phosphate: Arg-99, His-127, and Gln-130. L-aspartate is bound by residues Arg-161 and Arg-212. Positions 251 and 252 each coordinate carbamoyl phosphate.

It belongs to the aspartate/ornithine carbamoyltransferase superfamily. ATCase family. Heterododecamer (2C3:3R2) of six catalytic PyrB chains organized as two trimers (C3), and six regulatory PyrI chains organized as three dimers (R2).

It catalyses the reaction carbamoyl phosphate + L-aspartate = N-carbamoyl-L-aspartate + phosphate + H(+). Its pathway is pyrimidine metabolism; UMP biosynthesis via de novo pathway; (S)-dihydroorotate from bicarbonate: step 2/3. Its function is as follows. Catalyzes the condensation of carbamoyl phosphate and aspartate to form carbamoyl aspartate and inorganic phosphate, the committed step in the de novo pyrimidine nucleotide biosynthesis pathway. The sequence is that of Aspartate carbamoyltransferase catalytic subunit from Campylobacter jejuni subsp. jejuni serotype O:2 (strain ATCC 700819 / NCTC 11168).